Here is a 359-residue protein sequence, read N- to C-terminus: MIVSSEAFLNLNINEILKFRKFLNIRVSKIVCYLRRQDLWLESGYKQAVKSPFNRSTEKFKIKYFDYYSKLSNWKQAFPEAEIIVRIYDRKLFPEGNVILDFLQALGIDMPEAREYKIEANPSLSHLSTLVMRRINEELNLSPQDRWKVVNYLLELDRREGSILKTFFTLEERIKFLEQFRESNEKLFREYFGTKNQFVLSEEEIEFYRQQDQIPREVIERAIEERYQKVLEFMKREGIMAKEKIFPKVNVNYLPEANLEFFRIDVLQANLLNGRLILSGLLLPKNAEGVKLTVKDAEGIKEIQWGLPSPIFGELHPDNPIAKNARFRVDNVVPDLEKPIEVFLNGEKVAEIIIDGSRG.

This is an uncharacterized protein from Archaeoglobus fulgidus (strain ATCC 49558 / DSM 4304 / JCM 9628 / NBRC 100126 / VC-16).